The sequence spans 129 residues: Large ribosomal subunit protein bL12 (129 aa).

It belongs to the bacterial ribosomal protein bL12 family. Homodimer. Part of the ribosomal stalk of the 50S ribosomal subunit. Forms a multimeric L10(L12)X complex, where L10 forms an elongated spine to which 2 to 4 L12 dimers bind in a sequential fashion. Binds GTP-bound translation factors.

Its function is as follows. Forms part of the ribosomal stalk which helps the ribosome interact with GTP-bound translation factors. Is thus essential for accurate translation. In Fervidobacterium nodosum (strain ATCC 35602 / DSM 5306 / Rt17-B1), this protein is Large ribosomal subunit protein bL12.